The sequence spans 131 residues: Profilin-2 (131 aa).

Cys13 and Cys115 form a disulfide bridge. The Involved in PIP2 interaction motif lies at 81–97 (AVIRGKKGSGGITVKKT). The residue at position 111 (Thr111) is a Phosphothreonine.

Belongs to the profilin family. Occurs in many kinds of cells as a complex with monomeric actin in a 1:1 ratio. Phosphorylated by MAP kinases. In terms of tissue distribution, pollen specific.

The protein localises to the cytoplasm. The protein resides in the cytoskeleton. Its function is as follows. Binds to actin and affects the structure of the cytoskeleton. At high concentrations, profilin prevents the polymerization of actin, whereas it enhances it at low concentrations. By binding to PIP2, it inhibits the formation of IP3 and DG. The protein is Profilin-2 (PRO2) of Zea mays (Maize).